Consider the following 798-residue polypeptide: Translation initiation factor IF-2 (798 aa).

The tract at residues Ser-40 to Pro-207 is disordered. Positions Asn-57–Asn-186 are enriched in low complexity. Positions Arg-187–Lys-196 are enriched in basic residues. One can recognise a tr-type G domain in the interval Thr-300–Lys-469. Residues Gly-309–Thr-316 are G1. Gly-309–Thr-316 serves as a coordination point for GTP. The G2 stretch occupies residues Gly-334–His-338. Residues Asp-355 to Gly-358 form a G3 region. GTP is bound by residues Asp-355–His-359 and Asn-409–Asp-412. Residues Asn-409 to Asp-412 form a G4 region. The interval Ser-445–Lys-447 is G5.

The protein belongs to the TRAFAC class translation factor GTPase superfamily. Classic translation factor GTPase family. IF-2 subfamily.

It is found in the cytoplasm. In terms of biological role, one of the essential components for the initiation of protein synthesis. Protects formylmethionyl-tRNA from spontaneous hydrolysis and promotes its binding to the 30S ribosomal subunits. Also involved in the hydrolysis of GTP during the formation of the 70S ribosomal complex. This is Translation initiation factor IF-2 from Enterococcus faecalis (strain ATCC 700802 / V583).